The chain runs to 352 residues: tRNA N6-adenosine threonylcarbamoyltransferase (352 aa).

Fe cation is bound by residues H111 and H115. Residues 133–137 (LASGG), D166, G179, and N275 each bind substrate. D300 is a binding site for Fe cation.

Belongs to the KAE1 / TsaD family. Fe(2+) serves as cofactor.

It is found in the cytoplasm. The enzyme catalyses L-threonylcarbamoyladenylate + adenosine(37) in tRNA = N(6)-L-threonylcarbamoyladenosine(37) in tRNA + AMP + H(+). In terms of biological role, required for the formation of a threonylcarbamoyl group on adenosine at position 37 (t(6)A37) in tRNAs that read codons beginning with adenine. Is involved in the transfer of the threonylcarbamoyl moiety of threonylcarbamoyl-AMP (TC-AMP) to the N6 group of A37, together with TsaE and TsaB. TsaD likely plays a direct catalytic role in this reaction. This chain is tRNA N6-adenosine threonylcarbamoyltransferase, found in Treponema pallidum (strain Nichols).